The following is a 216-amino-acid chain: Pyridoxine/pyridoxamine 5'-phosphate oxidase (216 aa).

Residues 12-15 (RREY) and lysine 70 contribute to the substrate site. FMN is bound by residues 65–70 (RLVLLK), 80–81 (YT), arginine 86, lysine 87, and glutamine 109. Residues tyrosine 127, arginine 131, and serine 135 each coordinate substrate. FMN-binding positions include 144 to 145 (QS) and tryptophan 189. 195–197 (RMH) is a binding site for substrate. Arginine 199 is a binding site for FMN.

It belongs to the pyridoxamine 5'-phosphate oxidase family. Homodimer. FMN serves as cofactor.

It catalyses the reaction pyridoxamine 5'-phosphate + O2 + H2O = pyridoxal 5'-phosphate + H2O2 + NH4(+). The enzyme catalyses pyridoxine 5'-phosphate + O2 = pyridoxal 5'-phosphate + H2O2. The protein operates within cofactor metabolism; pyridoxal 5'-phosphate salvage; pyridoxal 5'-phosphate from pyridoxamine 5'-phosphate: step 1/1. Its pathway is cofactor metabolism; pyridoxal 5'-phosphate salvage; pyridoxal 5'-phosphate from pyridoxine 5'-phosphate: step 1/1. In terms of biological role, catalyzes the oxidation of either pyridoxine 5'-phosphate (PNP) or pyridoxamine 5'-phosphate (PMP) into pyridoxal 5'-phosphate (PLP). This chain is Pyridoxine/pyridoxamine 5'-phosphate oxidase, found in Sodalis glossinidius (strain morsitans).